The following is a 150-amino-acid chain: Large ribosomal subunit protein bL9 (150 aa).

Belongs to the bacterial ribosomal protein bL9 family.

In terms of biological role, binds to the 23S rRNA. This is Large ribosomal subunit protein bL9 from Staphylococcus aureus (strain NCTC 8325 / PS 47).